We begin with the raw amino-acid sequence, 280 residues long: Small ribosomal subunit protein uS2 (280 aa).

Belongs to the universal ribosomal protein uS2 family.

The sequence is that of Small ribosomal subunit protein uS2 from Desulforapulum autotrophicum (strain ATCC 43914 / DSM 3382 / VKM B-1955 / HRM2) (Desulfobacterium autotrophicum).